The following is a 389-amino-acid chain: Serpin B13 (389 aa).

Belongs to the serpin family. Ov-serpin subfamily.

Its subcellular location is the cytoplasm. Its function is as follows. May play a role in the proliferation or differentiation of keratinocytes. The protein is Serpin B13 (Serpinb13) of Mus musculus (Mouse).